The following is a 456-amino-acid chain: Trigger factor (456 aa).

A PPIase FKBP-type domain is found at 192–277 (GDTVVIDFVG…IHEVKTKEVP (86 aa)).

It belongs to the FKBP-type PPIase family. Tig subfamily.

Its subcellular location is the cytoplasm. The catalysed reaction is [protein]-peptidylproline (omega=180) = [protein]-peptidylproline (omega=0). Involved in protein export. Acts as a chaperone by maintaining the newly synthesized protein in an open conformation. Functions as a peptidyl-prolyl cis-trans isomerase. The sequence is that of Trigger factor from Streptococcus pyogenes serotype M4 (strain MGAS10750).